A 333-amino-acid polypeptide reads, in one-letter code: MASRQDRREARAEADARRAAEEIARARDERVMQAEVDARSAADEIARARADRGAATMGADTAHHAAAGGGILESVQEGAKSFVSAVGRTFGGARDTAAEKTSQTADATRDKLGEYKDYTADKARETNDSVARKTNETADATRDKLGEYKDYTADKTQETKDAVAQKASDASEATKNKLGEYKDALARKTRDAKDTTAQKATEFKDGVKATAQETRDATKDTTQTAADKARETAATHDDATDKGQGQGLLGALGNVTGAIKEKLTVSPAATQEHLGGGEERAVKERAAEKAASVYFEEKDRLTRERAAERVDKCVEKCVEGCPDATCAHRHGKM.

Disordered stretches follow at residues 1–20 and 116–246; these read MASR…RRAA and KDYT…GQGQ. A coiled-coil region spans residues 3–52; sequence SRQDRREARAEADARRAAEEIARARDERVMQAEVDARSAADEIARARADR. 3 stretches are compositionally biased toward basic and acidic residues: residues 116–163, 172–219, and 227–241; these read KDYT…KDAV, EATK…DATK, and DKAR…DATD.

Belongs to the LEA type 4 family.

The sequence is that of Late embryogenesis abundant protein 1 (LEA1) from Oryza sativa subsp. indica (Rice).